The chain runs to 206 residues: FMN-dependent NADH:quinone oxidoreductase 2 (206 aa).

An FMN-binding site is contributed by S10.

The protein belongs to the azoreductase type 1 family. As to quaternary structure, homodimer. Requires FMN as cofactor.

It catalyses the reaction 2 a quinone + NADH + H(+) = 2 a 1,4-benzosemiquinone + NAD(+). The enzyme catalyses N,N-dimethyl-1,4-phenylenediamine + anthranilate + 2 NAD(+) = 2-(4-dimethylaminophenyl)diazenylbenzoate + 2 NADH + 2 H(+). Functionally, quinone reductase that provides resistance to thiol-specific stress caused by electrophilic quinones. Also exhibits azoreductase activity. Catalyzes the reductive cleavage of the azo bond in aromatic azo compounds to the corresponding amines. The protein is FMN-dependent NADH:quinone oxidoreductase 2 of Rhizobium etli (strain ATCC 51251 / DSM 11541 / JCM 21823 / NBRC 15573 / CFN 42).